The primary structure comprises 188 residues: Elongation factor P (188 aa).

It belongs to the elongation factor P family.

The protein localises to the cytoplasm. It functions in the pathway protein biosynthesis; polypeptide chain elongation. Functionally, involved in peptide bond synthesis. Stimulates efficient translation and peptide-bond synthesis on native or reconstituted 70S ribosomes in vitro. Probably functions indirectly by altering the affinity of the ribosome for aminoacyl-tRNA, thus increasing their reactivity as acceptors for peptidyl transferase. This chain is Elongation factor P, found in Methylorubrum populi (strain ATCC BAA-705 / NCIMB 13946 / BJ001) (Methylobacterium populi).